A 65-amino-acid chain; its full sequence is Large ribosomal subunit protein bL35 (65 aa).

It belongs to the bacterial ribosomal protein bL35 family.

The chain is Large ribosomal subunit protein bL35 from Oleidesulfovibrio alaskensis (strain ATCC BAA-1058 / DSM 17464 / G20) (Desulfovibrio alaskensis).